The primary structure comprises 337 residues: Pentalenene synthase (337 aa).

Residues Asp80, Asp84, Asn219, Ser223, and Glu227 each contribute to the Mg(2+) site. A DDXXD motif motif is present at residues 80–84; the sequence is DDLFD.

It belongs to the terpene synthase family. Monomer. It depends on Mg(2+) as a cofactor.

The enzyme catalyses (2E,6E)-farnesyl diphosphate = pentalenene + diphosphate. It functions in the pathway sesquiterpene biosynthesis; pentalenene biosynthesis; pentalenene from farnesyl diphosphate: step 1/1. It participates in antibiotic biosynthesis; pentalenolactone biosynthesis. Catalyzes the cyclization of farnesyl diphosphate (FPP) to the tricyclic sesquiterpene pentalenene, which is the hydrocarbon precursor of the pentalenolactone family of antibiotics produced by a variety of Streptomyces species. The sequence is that of Pentalenene synthase (pntA) from Streptomyces arenae.